We begin with the raw amino-acid sequence, 215 residues long: Cytochrome b6 (215 aa).

A helical transmembrane segment spans residues 32–52; the sequence is IFYCLGGITLTCFLVQVATGF. Cysteine 35 contributes to the heme c binding site. 2 residues coordinate heme b: histidine 86 and histidine 100. 3 helical membrane passes run 90–110, 116–136, and 186–206; these read ASMMVLMTILHVFRVYLTGGF, LTWVTGVVLAVLTASFGVTGY, and LHTFVLPLLTAVFMLMHFLMI. Residues histidine 187 and histidine 202 each coordinate heme b.

It belongs to the cytochrome b family. PetB subfamily. As to quaternary structure, the 4 large subunits of the cytochrome b6-f complex are cytochrome b6, subunit IV (17 kDa polypeptide, PetD), cytochrome f and the Rieske protein, while the 4 small subunits are PetG, PetL, PetM and PetN. The complex functions as a dimer. The cofactor is heme b. Requires heme c as cofactor.

Its subcellular location is the plastid. It localises to the chloroplast thylakoid membrane. In terms of biological role, component of the cytochrome b6-f complex, which mediates electron transfer between photosystem II (PSII) and photosystem I (PSI), cyclic electron flow around PSI, and state transitions. The polypeptide is Cytochrome b6 (Citrus sinensis (Sweet orange)).